The chain runs to 90 residues: Acylphosphatase (90 aa).

The region spanning 4–90 (CVRVRVSGRV…KGHDDFKIIY (87 aa)) is the Acylphosphatase-like domain. Active-site residues include arginine 19 and asparagine 37.

The protein belongs to the acylphosphatase family.

It carries out the reaction an acyl phosphate + H2O = a carboxylate + phosphate + H(+). The polypeptide is Acylphosphatase (acyP) (Methanothrix thermoacetophila (strain DSM 6194 / JCM 14653 / NBRC 101360 / PT) (Methanosaeta thermophila)).